Here is a 504-residue protein sequence, read N- to C-terminus: Maturase K (504 aa).

This sequence belongs to the intron maturase 2 family. MatK subfamily.

It localises to the plastid. It is found in the chloroplast. In terms of biological role, usually encoded in the trnK tRNA gene intron. Probably assists in splicing its own and other chloroplast group II introns. The sequence is that of Maturase K from Quercus suber (Cork oak).